The chain runs to 1558 residues: Eukaryotic translation initiation factor 2-alpha kinase 1 (1558 aa).

In terms of domain architecture, Protein kinase spans 429-789; that stretch reads FFEEKILGCG…AYNLLHESVL (361 aa). Residues 435–443 and Lys458 each bind ATP; that span reads LGCGGFGYV. The active-site Proton acceptor is the Asp660. A disordered region spans residues 1014 to 1033; it reads GTSTNNNNNNNNNNMGNNNI.

This sequence belongs to the protein kinase superfamily. Ser/Thr protein kinase family. GCN2 subfamily. Post-translationally, auto-phosphorylated.

It carries out the reaction L-seryl-[protein] + ATP = O-phospho-L-seryl-[protein] + ADP + H(+). The enzyme catalyses L-threonyl-[protein] + ATP = O-phospho-L-threonyl-[protein] + ADP + H(+). In blood stage parasites, phosphorylates translation factor eIF2alpha in response to amino acid starvation. During the asexual blood stage, involved in the response to the host hormone melatonin which is used by the parasite to modulate its cell cycle. This Plasmodium falciparum (isolate 3D7) protein is Eukaryotic translation initiation factor 2-alpha kinase 1.